The chain runs to 518 residues: Glycerophosphoinositol transporter 1 (518 aa).

Over 1-44 (MEDKDITSVNEKEVNENTNPRIIKYDAERRATRTETSKKDKWKN) the chain is Cytoplasmic. The helical transmembrane segment at 45-65 (IVTIIASGFALISDGYVNGSM) threads the bilayer. Residues 66–91 (SMLNKVFVMEYGKKNYSSKVSTRVSN) are Extracellular-facing. Asn80 carries N-linked (GlcNAc...) asparagine glycosylation. A helical membrane pass occupies residues 92–112 (AALVGIIFGQFFMGIAADYYS). Topologically, residues 113-114 (RK) are cytoplasmic. The helical transmembrane segment at 115–136 (SCILVATAILVIGSALCAASHG) threads the bilayer. The Extracellular segment spans residues 137–138 (TT). Residues 139 to 159 (VPGMFWMLTVMRGLVGIGVGA) traverse the membrane as a helical segment. The Cytoplasmic segment spans residues 160–184 (EYPTSTLSANESANEYTTTKRGGIL). The chain crosses the membrane as a helical span at residues 185–205 (VMVTNLPLAFGGPFATIIFLI). The Extracellular segment spans residues 206–216 (VYKICSGTKHL). Residues 217–237 (EAIWRTVFAIGCFWPLSVFYF) traverse the membrane as a helical segment. The Cytoplasmic segment spans residues 238-268 (RWKTATTEVYEKGRIKRNIPYFLALKFYWKR). The helical transmembrane segment at 269–289 (LLGTCGTWFMYDFVTFPNGIF) threads the bilayer. Over 290–306 (SSTIISSVIKDQNDLVK) the chain is Extracellular. A helical transmembrane segment spans residues 307 to 327 (VAEWNLLLGVLAVLGVPIGAY). Residues 328–335 (LSDRIGRK) are Cytoplasmic-facing. A helical membrane pass occupies residues 336–356 (YTLMFGFSGYIIFGLIIGCAY). Residues 357-360 (DQLK) lie on the Extracellular side of the membrane. A helical membrane pass occupies residues 361 to 381 (KITPLFIIFYAFMNMLGNAGP). Over 382–399 (GDMLGVISSEASATAVRG) the chain is Cytoplasmic. A helical membrane pass occupies residues 400-420 (VFYGLSAVTGKIGSVVGVECF). Residues 421–430 (QPIRDNLGAR) lie on the Extracellular side of the membrane. Residues 431-451 (WTFIIAAICGLIGIIITYFFV) traverse the membrane as a helical segment. Residues 452–518 (PHSLESDLMK…IISVRQVDQS (67 aa)) are Cytoplasmic-facing.

The protein belongs to the major facilitator superfamily. Sugar transporter (TC 2.A.1.1) family.

Its subcellular location is the cell membrane. The enzyme catalyses sn-glycerol 3-phosphocholine(out) = sn-glycerol 3-phosphocholine(in). The catalysed reaction is sn-glycero-3-phospho-1D-myo-inositol(out) = sn-glycero-3-phospho-1D-myo-inositol(in). Functionally, glycerophosphodiester transporter that mediates uptake of both glycerophosphoinositol (GroPIns) and glycerophosphocholine (GroPCho) as sources of the nutrients inositol and phosphate. The protein is Glycerophosphoinositol transporter 1 of Saccharomyces cerevisiae (strain ATCC 204508 / S288c) (Baker's yeast).